The following is a 757-amino-acid chain: Zinc finger CCCH domain-containing protein 5 (757 aa).

The disordered stretch occupies residues 1–127; that stretch reads MEQANEKEEE…REEEERRWKD (127 aa). Basic and acidic residues predominate over residues 13-35; it reads HEEAAGEKESFEESKEKAAEMSR. Positions 36–50 are enriched in basic residues; sequence KEKRKAMKKLKRKQV. Positions 51–127 are enriched in basic and acidic residues; that stretch reads RKEIAAKERE…REEEERRWKD (77 aa). The C3H1-type 1 zinc-finger motif lies at 240 to 268; sequence EQDKAHCPFHLKTGACRFGQRCSRVHFYP. An RRM domain is found at 295-372; the sequence is YTDEEAELCY…KQVNCEFVNI (78 aa). A C3H1-type 2 zinc finger spans residues 374–404; that stretch reads RWKVAICGEYMKSRLKTCSRGSACNFIHCFR. Residues 441–757 form a disordered region; that stretch reads HESSGSLNDS…EEEIERWRPV (317 aa). The span at 444 to 455 shows a compositional bias: polar residues; sequence SGSLNDSISDLS. A compositionally biased stretch (basic and acidic residues) spans 487–546; sequence YHGDTQDSTREDKLRRHAENCHDGDDSPSRDGSLEREMYKERRYAKDTLHRDSRWSEHSP. Composition is skewed to basic residues over residues 547–557 and 600–609; these read GHRVGRKRIHG and KTHRSSRKHS. Composition is skewed to basic and acidic residues over residues 610 to 634, 644 to 672, and 681 to 721; these read REGS…DKSH, RSSS…KRSV, and SDKD…ETHK. Over residues 722-733 the composition is skewed to basic residues; it reads ERRHRHRKRRRT.

In Arabidopsis thaliana (Mouse-ear cress), this protein is Zinc finger CCCH domain-containing protein 5.